The primary structure comprises 85 residues: Large ribosomal subunit protein bL27 (85 aa).

The tract at residues 1–21 is disordered; that stretch reads MAHKKAGGSTRNGRDSNAKRL.

This sequence belongs to the bacterial ribosomal protein bL27 family.

The sequence is that of Large ribosomal subunit protein bL27 from Erwinia tasmaniensis (strain DSM 17950 / CFBP 7177 / CIP 109463 / NCPPB 4357 / Et1/99).